Reading from the N-terminus, the 128-residue chain is Glycine cleavage system H protein (128 aa).

Residues 23–105 (VATVGISDHA…YEGGWLFKVQ (83 aa)) form the Lipoyl-binding domain. K64 carries the N6-lipoyllysine modification.

It belongs to the GcvH family. The glycine cleavage system is composed of four proteins: P, T, L and H. The cofactor is (R)-lipoate.

In terms of biological role, the glycine cleavage system catalyzes the degradation of glycine. The H protein shuttles the methylamine group of glycine from the P protein to the T protein. The chain is Glycine cleavage system H protein from Alcanivorax borkumensis (strain ATCC 700651 / DSM 11573 / NCIMB 13689 / SK2).